We begin with the raw amino-acid sequence, 314 residues long: Putative glycosyltransferase ORF31 (314 aa).

It belongs to the glycosyltransferase group 1 family.

This chain is Putative glycosyltransferase ORF31, found in Haloarcula hispanica (His1V).